The chain runs to 861 residues: Extra-large guanine nucleotide-binding protein 2 (861 aa).

Disordered stretches follow at residues Met1–Gly32 and Val121–Val168. Over residues Lys131–Ala143 the composition is skewed to basic and acidic residues. Residues Arg146–Ser156 are compositionally biased toward low complexity. Over residues Ala157–Val168 the composition is skewed to basic and acidic residues. The short motif at Arg204 to Arg211 is the Nuclear localization signal element. The RING-type; degenerate zinc-finger motif lies at Cys214–Cys257. One can recognise a G-alpha domain in the interval Met461–Thr853. The segment at Lys464 to Thr477 is G1 motif. Position 469-477 (Gly469–Thr477) interacts with GTP. Thr476 serves as a coordination point for Ca(2+). The interval Glu523–Ile545 is disordered. Residue Asp624 to Ser632 participates in GTP binding. The interval Asp624–Ser632 is G2 motif. Position 632 (Ser632) interacts with Ca(2+). The interval Tyr665–Ser674 is G3 motif. The G4 motif stretch occupies residues Leu737–Asp744. Thr741 to Asp744 is a binding site for GTP. The tract at residues Gln818–Ser823 is G5 motif.

The protein belongs to the G-alpha family. XLG subfamily. As to quaternary structure, interacts with GB1. Component of a G-protein complex at least composed of XLG2 and GB1. Interacts with RTV1. Ca(2+) serves as cofactor. In terms of tissue distribution, ubiquitous. Strongly expressed in vascular tissues, root and shoot meristems and lateral root primordia.

The protein resides in the nucleus. In terms of biological role, guanine nucleotide-binding proteins (G proteins) are involved as modulators or transducers in various transmembrane signaling systems. Binds GTP with specificity. Plays a role in the root morphogenesis by regulation of the cell proliferation. Acts as a positive regulator in resistance to pathogen that triggers the salicylic acid (SA) pathway. Promotes the DNA binding activity of RTV1 specifically to promoter regions of FT and SOC1 in vivo leading to the activation of floral integrator genes. The sequence is that of Extra-large guanine nucleotide-binding protein 2 (XLG2) from Arabidopsis thaliana (Mouse-ear cress).